Reading from the N-terminus, the 375-residue chain is GDP-mannose transporter GONST2 (375 aa).

The next 9 helical transmembrane spans lie at Leu-79–Val-99, Met-112–Val-132, Leu-141–Tyr-161, Tyr-165–Gly-185, Trp-199–Phe-219, Met-262–Gly-282, Val-300–Leu-320, Thr-327–Phe-347, and Val-349–Phe-369.

This sequence belongs to the nucleotide-sugar transporter family. GDP-Mannose:GMP antiporter (GMA) (TC 2.A.7.13) subfamily. In terms of tissue distribution, expressed in rosette leaves, stems, flowers and siliques.

Its subcellular location is the golgi apparatus membrane. GDP-mannose transporter that may be involved in the import of GDP-mannose from the cytoplasm into the Golgi lumen. In Arabidopsis thaliana (Mouse-ear cress), this protein is GDP-mannose transporter GONST2.